The following is a 544-amino-acid chain: ATP synthase subunit alpha (544 aa).

173–180 (GDRQTGKT) provides a ligand contact to ATP. The segment at 513–544 (GSDGQIIGGGEPESDGEDVDVEQEQIVRQKRG) is disordered. A compositionally biased stretch (acidic residues) spans 524–535 (PESDGEDVDVEQ).

Belongs to the ATPase alpha/beta chains family. As to quaternary structure, F-type ATPases have 2 components, CF(1) - the catalytic core - and CF(0) - the membrane proton channel. CF(1) has five subunits: alpha(3), beta(3), gamma(1), delta(1), epsilon(1). CF(0) has three main subunits: a(1), b(2) and c(9-12). The alpha and beta chains form an alternating ring which encloses part of the gamma chain. CF(1) is attached to CF(0) by a central stalk formed by the gamma and epsilon chains, while a peripheral stalk is formed by the delta and b chains.

The protein localises to the cell membrane. It carries out the reaction ATP + H2O + 4 H(+)(in) = ADP + phosphate + 5 H(+)(out). Produces ATP from ADP in the presence of a proton gradient across the membrane. The alpha chain is a regulatory subunit. This Beutenbergia cavernae (strain ATCC BAA-8 / DSM 12333 / CCUG 43141 / JCM 11478 / NBRC 16432 / NCIMB 13614 / HKI 0122) protein is ATP synthase subunit alpha.